The sequence spans 427 residues: Adenylosuccinate synthetase (427 aa).

GTP-binding positions include 12-18 and 40-42; these read GDEGKGK and GHT. The active-site Proton acceptor is Asp13. Mg(2+) is bound by residues Asp13 and Gly40. IMP contacts are provided by residues 13–16, 38–41, Thr128, Arg142, Gln223, Thr238, and Arg302; these read DEGK and NAGH. His41 acts as the Proton donor in catalysis. 298–304 lines the substrate pocket; the sequence is TTTGRPR. Residues Arg304, 330–332, and 412–414 each bind GTP; these read LLD and SVG.

The protein belongs to the adenylosuccinate synthetase family. In terms of assembly, homodimer. Requires Mg(2+) as cofactor.

It is found in the cytoplasm. The enzyme catalyses IMP + L-aspartate + GTP = N(6)-(1,2-dicarboxyethyl)-AMP + GDP + phosphate + 2 H(+). It functions in the pathway purine metabolism; AMP biosynthesis via de novo pathway; AMP from IMP: step 1/2. In terms of biological role, plays an important role in the de novo pathway of purine nucleotide biosynthesis. Catalyzes the first committed step in the biosynthesis of AMP from IMP. This Alkaliphilus metalliredigens (strain QYMF) protein is Adenylosuccinate synthetase.